A 154-amino-acid chain; its full sequence is MAPKAEKKPAAKKVAEEEPSEKAAPAEKAPAGKKPKAEKRLPAGKSAGKEGGDKKGRKKAKKSVETYKIYIFKVLKQVHPDIGISSKAMSIMNSFINDIFEKLAAEAAKLARYNKKPTITSREIQTSVRLVLPGELAKHAVSEGTKAVTKFTSS.

The span at 1-25 (MAPKAEKKPAAKKVAEEEPSEKAAP) shows a compositional bias: basic and acidic residues. A disordered region spans residues 1-62 (MAPKAEKKPA…DKKGRKKAKK (62 aa)). N6-acetyllysine occurs at positions 7 and 39. Residue lysine 150 forms a Glycyl lysine isopeptide (Lys-Gly) (interchain with G-Cter in ubiquitin) linkage.

It belongs to the histone H2B family. As to quaternary structure, the nucleosome is a histone octamer containing two molecules each of H2A, H2B, H3 and H4 assembled in one H3-H4 heterotetramer and two H2A-H2B heterodimers. The octamer wraps approximately 147 bp of DNA. Can be acetylated to form H2BK6ac and H2BK33ac. Post-translationally, monoubiquitinated to form H2BK143ub1; may give a specific tag for epigenetic transcriptional activation.

It localises to the nucleus. The protein resides in the chromosome. Core component of nucleosome. Nucleosomes wrap and compact DNA into chromatin, limiting DNA accessibility to the cellular machineries which require DNA as a template. Histones thereby play a central role in transcription regulation, DNA repair, DNA replication and chromosomal stability. DNA accessibility is regulated via a complex set of post-translational modifications of histones, also called histone code, and nucleosome remodeling. In Zea mays (Maize), this protein is Histone H2B.5.